The sequence spans 85 residues: Granaticin polyketide synthase acyl carrier protein (85 aa).

The region spanning 3 to 81 (RLTLDGLRTI…VLLDLVNGAQ (79 aa)) is the Carrier domain. Ser-41 carries the O-(pantetheine 4'-phosphoryl)serine modification.

In terms of processing, 4'-phosphopantetheine is transferred from CoA to a specific serine of the apo-ACP-like protein.

It participates in antibiotic biosynthesis; granaticin biosynthesis. Acyl carrier protein. This chain is Granaticin polyketide synthase acyl carrier protein, found in Streptomyces violaceoruber.